Consider the following 394-residue polypeptide: Phosphoglycerate kinase (394 aa).

Substrate is bound by residues 21-23, arginine 36, 59-62, arginine 118, and arginine 151; these read DFN and HLGR. Phosphoserine is present on serine 183. 2 residues coordinate ATP: lysine 201 and glycine 292. At threonine 299 the chain carries Phosphothreonine. ATP-binding positions include glutamate 323 and 350-353; that span reads GGDS.

The protein belongs to the phosphoglycerate kinase family. Monomer.

It is found in the cytoplasm. The catalysed reaction is (2R)-3-phosphoglycerate + ATP = (2R)-3-phospho-glyceroyl phosphate + ADP. Its pathway is carbohydrate degradation; glycolysis; pyruvate from D-glyceraldehyde 3-phosphate: step 2/5. The protein is Phosphoglycerate kinase of Bacillus anthracis (strain A0248).